Consider the following 312-residue polypeptide: Taste receptor type 2 member 9 (312 aa).

At 1-9 (MPSAIEAIY) the chain is on the extracellular side. Residues 10–32 (IILIAGELTIGIWGNGFIVLVNC) form a helical membrane-spanning segment. Residues 33–52 (XDWLKRRDISLIDIILISLA) are Cytoplasmic-facing. The chain crosses the membrane as a helical span at residues 53–72 (ISRICLLCVISLDGFFMLLF). Residues 73–86 (PGTYGNSVLVSIVN) lie on the Extracellular side of the membrane. A helical membrane pass occupies residues 87–109 (VVWTFANNSSLWFTSCLSIFYLL). Topologically, residues 110–128 (KIANISHPFFFWLKLKINK) are cytoplasmic. Residues 129–146 (VMLAILLGSFLISLIISV) form a helical membrane-spanning segment. The Extracellular portion of the chain corresponds to 147-180 (XKNDDMWYHLFKVSXEENITWEFKVSKIPGTFKQ). A glycan (N-linked (GlcNAc...) asparagine) is linked at asparagine 164. The chain crosses the membrane as a helical span at residues 181–203 (LTLNLGGRVPFILCLISFFLLLF). The Cytoplasmic segment spans residues 204–234 (SLVRHTKQIQLHATGFRDPSTEAHMRAIKAV). A helical membrane pass occupies residues 235-257 (IIFLLLLIVYYPVFLVMTSSALI). The Extracellular segment spans residues 258 to 261 (PQGK). The chain crosses the membrane as a helical span at residues 262–284 (LVLMIGDIVTVIFPSSHSFILIM). Residues 285–312 (GNSKLREAFLKMLRFVKGFLRRRKPFVP) are Cytoplasmic-facing.

This sequence belongs to the G-protein coupled receptor T2R family.

It localises to the membrane. Its function is as follows. Gustducin-coupled receptor implicated in the perception of bitter compounds in the oral cavity and the gastrointestinal tract. Signals through PLCB2 and the calcium-regulated cation channel TRPM5. This is Taste receptor type 2 member 9 (TAS2R9) from Pan troglodytes (Chimpanzee).